The sequence spans 143 residues: Large ribosomal subunit protein uL11 (143 aa).

It belongs to the universal ribosomal protein uL11 family. As to quaternary structure, part of the ribosomal stalk of the 50S ribosomal subunit. Interacts with L10 and the large rRNA to form the base of the stalk. L10 forms an elongated spine to which L12 dimers bind in a sequential fashion forming a multimeric L10(L12)X complex. One or more lysine residues are methylated.

In terms of biological role, forms part of the ribosomal stalk which helps the ribosome interact with GTP-bound translation factors. The chain is Large ribosomal subunit protein uL11 from Pseudomonas putida (strain ATCC 700007 / DSM 6899 / JCM 31910 / BCRC 17059 / LMG 24140 / F1).